We begin with the raw amino-acid sequence, 860 residues long: MQEQYRPEDIEQTIQEHWEKNNTFKVTEDNNKEKYYCLSMLPYPSGRLHMGHVRNYTIGDVISRYQRMLGKNVLQPIGWDAFGLPAEGAAVKNNTAPAPWTYENINYMKGQLKKLGFGYDWDREVTTCTPEYYRWEQWFFTKLYEKGLVYKKTSAVNWCPHDLTVLANEQVIDGCCWRCDTPVERKEIPQWFIKITDYAEELLNDLDTLDEWPEQVKTMQRNWIGRSEGVEITFDVADSDDTMTVYTTRPDTFMGVTYVAVAAGHPLAQKAAQNNPEIQHFIDECRNMKMAEAEMATMEKKGIATGLYAIHPLTQEKVAIWVANFVLMEYGTGAVMAVPGHDERDWEFATKYGLPIKAVIADAEGNQPDLSTGALTEKNSLINSGEFSGLDNQAGFNAIADKLTAMGVGERKVNYRLRDWGVSRQRYWGAPIPMATLEDGSVVPVPDDQLPVILPEDVKMDGITSPIKADPEWAKTTINGQPALRETDTFDTFMESSWYYARYTCPDYDKGMLDPKAANYWLPVDWYIGGIEHAIMHLMYFRFFHKLMRDAGLVNSDEPAKRLLCQGMVLADAFYYTGEDGARHWVSPAEAIVERDEKNRIIKATDSAGHELTYAGMSKMSKSKNNGIDPQTMVERYGADTVRLFMMFAAPPELTLEWQESSVEGANRFLRRLWRLVHEHTEKGTTQSLDLATLTTEQKDLRRDLHKTIAKVSDDVGRRLAFNTAIAAIMELMNKLTRAPQETEQDRALMQEALEAVVRMLSPIIPHACFVMWQALGGKEDIDVAPWPVADEEAMVDDTKLIIVQVNGKVRGRITVPANSEKDYVQEMATKEYSVAKYLENVTVRKVIYVPGKLLNIVVG.

The 'HIGH' region signature appears at 42–52; it reads PYPSGRLHMGH. A 'KMSKS' region motif is present at residues 619–623; the sequence is KMSKS. Position 622 (lysine 622) interacts with ATP.

This sequence belongs to the class-I aminoacyl-tRNA synthetase family.

It localises to the cytoplasm. The catalysed reaction is tRNA(Leu) + L-leucine + ATP = L-leucyl-tRNA(Leu) + AMP + diphosphate. This Proteus mirabilis (strain HI4320) protein is Leucine--tRNA ligase.